A 917-amino-acid polypeptide reads, in one-letter code: Protein translocase subunit SecA (917 aa).

Residues glutamine 87, glycine 105–threonine 109, and aspartate 516 each bind ATP. Zn(2+) is bound by residues cysteine 901, cysteine 903, cysteine 912, and histidine 913.

This sequence belongs to the SecA family. Monomer and homodimer. Part of the essential Sec protein translocation apparatus which comprises SecA, SecYEG and auxiliary proteins SecDF-YajC and YidC. Zn(2+) is required as a cofactor.

The protein localises to the cell inner membrane. The protein resides in the cytoplasm. The catalysed reaction is ATP + H2O + cellular proteinSide 1 = ADP + phosphate + cellular proteinSide 2.. Functionally, part of the Sec protein translocase complex. Interacts with the SecYEG preprotein conducting channel. Has a central role in coupling the hydrolysis of ATP to the transfer of proteins into and across the cell membrane, serving both as a receptor for the preprotein-SecB complex and as an ATP-driven molecular motor driving the stepwise translocation of polypeptide chains across the membrane. The polypeptide is Protein translocase subunit SecA (Acidovorax ebreus (strain TPSY) (Diaphorobacter sp. (strain TPSY))).